Reading from the N-terminus, the 856-residue chain is DNA gyrase subunit A (856 aa).

The region spanning 45 to 517 (LPDARDGLKP…DDGTVTHEDL (473 aa)) is the Topo IIA-type catalytic domain. Tyr-133 (O-(5'-phospho-DNA)-tyrosine intermediate) is an active-site residue. Positions 544-550 (QHRGGKG) match the GyrA-box motif. Residues 822–856 (TVASVDTHPRTDDSSEADSGDGESESENATATTPS) form a disordered region. A compositionally biased stretch (acidic residues) spans 835–847 (SSEADSGDGESES).

It belongs to the type II topoisomerase GyrA/ParC subunit family. In terms of assembly, heterotetramer, composed of two GyrA and two GyrB chains. In the heterotetramer, GyrA contains the active site tyrosine that forms a transient covalent intermediate with DNA, while GyrB binds cofactors and catalyzes ATP hydrolysis.

The protein localises to the cytoplasm. It catalyses the reaction ATP-dependent breakage, passage and rejoining of double-stranded DNA.. In terms of biological role, a type II topoisomerase that negatively supercoils closed circular double-stranded (ds) DNA in an ATP-dependent manner to modulate DNA topology and maintain chromosomes in an underwound state. Negative supercoiling favors strand separation, and DNA replication, transcription, recombination and repair, all of which involve strand separation. Also able to catalyze the interconversion of other topological isomers of dsDNA rings, including catenanes and knotted rings. Type II topoisomerases break and join 2 DNA strands simultaneously in an ATP-dependent manner. This is DNA gyrase subunit A from Haloquadratum walsbyi (strain DSM 16790 / HBSQ001).